Reading from the N-terminus, the 244-residue chain is tRNA pseudouridine synthase A (244 aa).

The active-site Nucleophile is the aspartate 52. Tyrosine 110 is a substrate binding site.

It belongs to the tRNA pseudouridine synthase TruA family. Homodimer.

It catalyses the reaction uridine(38/39/40) in tRNA = pseudouridine(38/39/40) in tRNA. Formation of pseudouridine at positions 38, 39 and 40 in the anticodon stem and loop of transfer RNAs. This Clostridium acetobutylicum (strain ATCC 824 / DSM 792 / JCM 1419 / IAM 19013 / LMG 5710 / NBRC 13948 / NRRL B-527 / VKM B-1787 / 2291 / W) protein is tRNA pseudouridine synthase A.